The sequence spans 142 residues: Large ribosomal subunit protein bL17 (142 aa).

Belongs to the bacterial ribosomal protein bL17 family. In terms of assembly, part of the 50S ribosomal subunit. Contacts protein L32.

This Chlamydia caviae (strain ATCC VR-813 / DSM 19441 / 03DC25 / GPIC) (Chlamydophila caviae) protein is Large ribosomal subunit protein bL17.